Reading from the N-terminus, the 344-residue chain is Dihydroorotase (344 aa).

The Zn(2+) site is built by His-14 and His-16. Substrate contacts are provided by residues His-16–Arg-18 and Asn-42. 3 residues coordinate Zn(2+): Lys-100, His-137, and His-175. At Lys-100 the chain carries N6-carboxylysine. His-137 contributes to the substrate binding site. Leu-220 provides a ligand contact to substrate. Residue Asp-248 participates in Zn(2+) binding. Asp-248 is an active-site residue. Residues His-252 and Ala-264 each contribute to the substrate site.

The protein belongs to the metallo-dependent hydrolases superfamily. DHOase family. Class II DHOase subfamily. Homodimer. It depends on Zn(2+) as a cofactor.

The catalysed reaction is (S)-dihydroorotate + H2O = N-carbamoyl-L-aspartate + H(+). It participates in pyrimidine metabolism; UMP biosynthesis via de novo pathway; (S)-dihydroorotate from bicarbonate: step 3/3. In terms of biological role, catalyzes the reversible cyclization of carbamoyl aspartate to dihydroorotate. The polypeptide is Dihydroorotase (Ralstonia pickettii (strain 12J)).